Here is a 150-residue protein sequence, read N- to C-terminus: S-protein homolog 28 (150 aa).

N-linked (GlcNAc...) asparagine glycosylation occurs at N122.

It belongs to the plant self-incompatibility (S1) protein family.

The protein localises to the secreted. This is S-protein homolog 28 from Arabidopsis thaliana (Mouse-ear cress).